The following is a 219-amino-acid chain: Probable nicotinate-nucleotide adenylyltransferase (219 aa).

The protein belongs to the NadD family.

The enzyme catalyses nicotinate beta-D-ribonucleotide + ATP + H(+) = deamido-NAD(+) + diphosphate. The protein operates within cofactor biosynthesis; NAD(+) biosynthesis; deamido-NAD(+) from nicotinate D-ribonucleotide: step 1/1. Its function is as follows. Catalyzes the reversible adenylation of nicotinate mononucleotide (NaMN) to nicotinic acid adenine dinucleotide (NaAD). The polypeptide is Probable nicotinate-nucleotide adenylyltransferase (Pseudomonas entomophila (strain L48)).